The sequence spans 648 residues: Mitochondrial Rho GTPase 3 (648 aa).

At 1 to 621 the chain is on the cytoplasmic side; that stretch reads MWMGVGDSSG…KRSCKLNNRS (621 aa). S11 is subject to Phosphoserine. The Miro 1 domain occupies 12 to 179; sequence PKPIRIVVVG…LYYAQKAVID (168 aa). EF-hand domains lie at 195–230 and 316–351; these read RCIA…CFDT and VAIE…APES. Positions 208, 210, 212, 219, 329, 331, 333, 335, and 340 each coordinate Ca(2+). Residues 425–599 enclose the Miro 2 domain; that stretch reads RKVVQCFVFG…FRKILTAAEN (175 aa). A helical membrane pass occupies residues 622–644; that stretch reads LMAVSIGTAVLIAGLASFRLYTA. Residues 645-648 are Mitochondrial intermembrane-facing; it reads RKQS.

This sequence belongs to the mitochondrial Rho GTPase family. Expressed at very low levels in roots, leaves, stems, flowers and siliques.

It is found in the mitochondrion outer membrane. In terms of biological role, mitochondrial GTPase that may be involved in mitochondrion development. In Arabidopsis thaliana (Mouse-ear cress), this protein is Mitochondrial Rho GTPase 3.